The chain runs to 155 residues: Small ribosomal subunit protein uS7 (155 aa).

This sequence belongs to the universal ribosomal protein uS7 family. As to quaternary structure, part of the 30S ribosomal subunit. Contacts proteins S9 and S11.

One of the primary rRNA binding proteins, it binds directly to 16S rRNA where it nucleates assembly of the head domain of the 30S subunit. Is located at the subunit interface close to the decoding center, probably blocks exit of the E-site tRNA. The polypeptide is Small ribosomal subunit protein uS7 (Lactococcus lactis subsp. lactis (strain IL1403) (Streptococcus lactis)).